Consider the following 100-residue polypeptide: Urease subunit gamma (100 aa).

Belongs to the urease gamma subunit family. Probable heterotrimer of UreA (gamma), UreB (beta) and UreC (alpha) subunits. Three heterotrimers associate to form the active enzyme. The trimeric urease interacts with an accessory complex composed of UreD, UreF and UreG, which is required for the assembly of the nickel containing metallocenter of UreC. The UreE protein may also play a direct role in nickel transfer to the urease apoprotein.

Its subcellular location is the cytoplasm. The enzyme catalyses urea + 2 H2O + H(+) = hydrogencarbonate + 2 NH4(+). It participates in nitrogen metabolism; urea degradation; CO(2) and NH(3) from urea (urease route): step 1/1. The chain is Urease subunit gamma from Proteus mirabilis (strain HI4320).